The primary structure comprises 989 residues: Frequency clock protein (989 aa).

3 disordered regions span residues 1–139, 208–290, and 331–445; these read MADS…PGFR, FAAS…VGTQ, and ISGR…PDRV. A compositionally biased stretch (basic and acidic residues) spans 36–45; sequence ENHRLARDTS. The segment covering 46-88 has biased composition (polar residues); sequence SRVTSSSALGVTESQPQLKSSPTRRNSSGESEPTNWFNQSNRN. Residues 109-119 show a composition bias toward basic and acidic residues; sequence KETDSSNEESR. A compositionally biased stretch (low complexity) spans 233–255; it reads HSSGVSLSKHDSSSSSRSRPVDS. Polar residues-rich tracts occupy residues 256–274 and 334–343; these read AYNS…SSGP and RNMQRNQSMP. Basic and acidic residues predominate over residues 377–386; that stretch reads DNPRKNRSSK. A compositionally biased stretch (polar residues) spans 387–397; that stretch reads DNGSASNSGGD. Residues 402–418 show a composition bias toward gly residues; that stretch reads GGTGTGSGDGSGSGGRT. Residues 433–444 are compositionally biased toward basic and acidic residues; that stretch reads RPTRPRDLDPDR. Residue Thr-501 is modified to Phosphothreonine. A phosphoserine mark is found at Ser-513 and Ser-519. Disordered regions lie at residues 524-642, 865-907, and 968-989; these read KIRW…QRRK, WDDG…TYMR, and SVAT…VSSS. Residues 564–568 carry the Nuclear localization signal motif; the sequence is RKKRK. A compositionally biased stretch (polar residues) spans 598 to 615; that stretch reads RNSSSIETSLEESMSQGS. The segment covering 865 to 886 has biased composition (acidic residues); sequence WDDGDDLASDDEEVEEVEEDSY. The span at 978-989 shows a compositional bias: polar residues; it reads GYSSSMEDVSSS.

It belongs to the FRQ family. In terms of processing, progressive phosphorylation during the late circadian day and early night. Phosphorylation is also involved in regulating frq degradation. Phosphorylation by CKII may have at least three functions; it decreases the stability of frq, reduces the protein complex formation between frq and the white collar proteins, and is important for the closing of the Neurospora circadian negative feedback loop.

Its subcellular location is the nucleus. Functionally, circadian clock component involved in the generation of biological rhythms, in particular in rhythm stability, period length, and temperature compensation. Oscillates in abundance with a daily peak early in the morning. Behaves as a negative element in circadian transcriptional loop. May bind to wc-2 protein. The complex frq-wc-2 may turn off the expression of frq. This Neurospora crassa (strain ATCC 24698 / 74-OR23-1A / CBS 708.71 / DSM 1257 / FGSC 987) protein is Frequency clock protein (frq).